We begin with the raw amino-acid sequence, 318 residues long: uncharacterized protein (318 aa).

The protein to A.aeolicus AA07 and AA11.

This is an uncharacterized protein from Aquifex aeolicus (strain VF5).